Consider the following 226-residue polypeptide: 3-isopropylmalate dehydratase small subunit (226 aa).

The interval 204 to 226 is disordered; it reads EAETVESAREPEAVEWAGPLADR.

Belongs to the LeuD family. LeuD type 1 subfamily. In terms of assembly, heterodimer of LeuC and LeuD.

The catalysed reaction is (2R,3S)-3-isopropylmalate = (2S)-2-isopropylmalate. Its pathway is amino-acid biosynthesis; L-leucine biosynthesis; L-leucine from 3-methyl-2-oxobutanoate: step 2/4. Functionally, catalyzes the isomerization between 2-isopropylmalate and 3-isopropylmalate, via the formation of 2-isopropylmaleate. The protein is 3-isopropylmalate dehydratase small subunit of Bifidobacterium animalis subsp. lactis (strain AD011).